Here is a 379-residue protein sequence, read N- to C-terminus: Programmed cell death protein 2-like (379 aa).

In Gallus gallus (Chicken), this protein is Programmed cell death protein 2-like (PDCD2L).